A 389-amino-acid polypeptide reads, in one-letter code: Naringenin-chalcone synthase (389 aa).

Residue cysteine 164 is part of the active site.

It belongs to the thiolase-like superfamily. Chalcone/stilbene synthases family. Expressed in glandular trichomes. Detected at low levels in female flowers, stems, seeds, leaves and roots.

The protein resides in the cytoplasm. It carries out the reaction (E)-4-coumaroyl-CoA + 3 malonyl-CoA + 3 H(+) = 2',4,4',6'-tetrahydroxychalcone + 3 CO2 + 4 CoA. Functionally, chalcone synthase that can also use isovaleryl-CoA, isobutyryl-CoA or hexanoyl-CoA as substrates, but that is unable to produce olivetol or olivetolic acid. The chain is Naringenin-chalcone synthase (CHS) from Cannabis sativa (Hemp).